The following is a 491-amino-acid chain: Probable glycogen synthase 2 (491 aa).

K15 provides a ligand contact to ADP-alpha-D-glucose.

Belongs to the glycosyltransferase 1 family. Bacterial/plant glycogen synthase subfamily.

It carries out the reaction [(1-&gt;4)-alpha-D-glucosyl](n) + ADP-alpha-D-glucose = [(1-&gt;4)-alpha-D-glucosyl](n+1) + ADP + H(+). The protein operates within glycan biosynthesis; glycogen biosynthesis. In terms of biological role, synthesizes alpha-1,4-glucan chains using ADP-glucose. In Synechocystis sp. (strain ATCC 27184 / PCC 6803 / Kazusa), this protein is Probable glycogen synthase 2 (glgA2).